Consider the following 960-residue polypeptide: RasGEF domain-containing serine/threonine-protein kinase X (960 aa).

Residues 21–274 (LEFNEKIGKG…FDEILSQLKV (254 aa)) form the Protein kinase domain. Residues 27–35 (IGKGSFGSV) and Lys48 contribute to the ATP site. Asp140 (proton acceptor) is an active-site residue. Over residues 314 to 368 (NISFSPNNSNNNNNNNNNISNISPDITTGIQQINLSSSGGSNNSSPSTPPQGSQL) the composition is skewed to low complexity. Disordered regions lie at residues 314–372 (NISF…VSLA) and 393–413 (GQLSTTPPPTSPIQSRPHKPS). The 129-residue stretch at 437-565 (PCYAALTSHI…LGTTISNNEL (129 aa)) folds into the N-terminal Ras-GEF domain. Positions 596–651 (NNNNNNNNNPVNNINNINNNNSVNSSSSNNNNNNNNNNSNNNNNNNNNNNNNNNNN) are disordered. Residues 712–957 (HSTELARQIT…KNNSLKCEPP (246 aa)) enclose the Ras-GEF domain.

It belongs to the protein kinase superfamily. TKL Ser/Thr protein kinase family.

It catalyses the reaction L-seryl-[protein] + ATP = O-phospho-L-seryl-[protein] + ADP + H(+). The enzyme catalyses L-threonyl-[protein] + ATP = O-phospho-L-threonyl-[protein] + ADP + H(+). Functionally, promotes the exchange of Ras-bound GDP by GTP. This chain is RasGEF domain-containing serine/threonine-protein kinase X (gefX), found in Dictyostelium discoideum (Social amoeba).